The primary structure comprises 185 residues: Prorelaxin H1 (185 aa).

An N-terminal signal peptide occupies residues 1–22 (MPRLFLFHLLEFCLLLNQFSRA). 3 disulfides stabilise this stretch: C35/C172, C47/C185, and C171/C176. The propeptide at 56–158 (SLSQEDAPQT…KYLGLDTHSQ (103 aa)) is connecting peptide.

It belongs to the insulin family. In terms of assembly, heterodimer of a B chain and an A chain linked by two disulfide bonds. In terms of tissue distribution, prostate. Not expressed in placenta, decidua or ovary.

Its subcellular location is the secreted. Relaxin is an ovarian hormone that acts with estrogen to produce dilatation of the birth canal in many mammals. May be involved in remodeling of connective tissues during pregnancy, promoting growth of pubic ligaments and ripening of the cervix. This Homo sapiens (Human) protein is Prorelaxin H1 (RLN1).